The following is a 491-amino-acid chain: MALLLSYPRRHPSIHLLILSAYALFLLPILDGLELGGDGLYREILRDETVLRLKELGKISDGEGYLERTFLSPASIRASAVIISWMKDAGLTTWIDQMGNIHGRFEPTNSTKEALLIGSHMDTVIDAGMYDGALGIISAISALKVLKVTGRLQRLTRPVEVIAFSDEEGVRFQTTFLGSAAVAGTLPESILQVSDKSGTTVQDVLKLNSLEGTANALGEVRYSPESVGSYVEVHIEQGPVLEALRYPLGVVKGIAGQTRLKVIINGSQGHAGTVPMKLRRDPMVAAAELVLTLETLCKEPNKFLTYDEECGCFTEESLAGLVCTVGELLTWPSASNVIPGQVNFTVDIRAMDDKVRETIVTSFSRLVLQRCDDRLVDCAVEQKHAAAATPCDAELTSRLERATRSTISSMAAGVRRAGGETPVLMSGAGHDAMAMARLTKVGMLFVRCRGGVSHSPEESVMDDDVWAAGLALVNFIDQNAVDAAAATAAES.

The N-terminal stretch at 1–32 (MALLLSYPRRHPSIHLLILSAYALFLLPILDG) is a signal peptide. An N-linked (GlcNAc...) asparagine glycan is attached at Asn-109. Positions 120, 131, 168, and 234 each coordinate Mn(2+). N-linked (GlcNAc...) asparagine glycans are attached at residues Asn-265 and Asn-343. His-454 is a binding site for Mn(2+).

It belongs to the peptidase M20A family. In terms of assembly, homodimer. It depends on Mn(2+) as a cofactor.

It localises to the endoplasmic reticulum. It catalyses the reaction allantoate + H2O + 2 H(+) = (S)-2-ureidoglycine + NH4(+) + CO2. In terms of biological role, involved in the catabolism of purine nucleotides. The sequential activity of AAH, UGLYAH and UAH allows a complete purine breakdown without the intermediate generation of urea. The sequence is that of Probable allantoate deiminase from Oryza sativa subsp. japonica (Rice).